The chain runs to 69 residues: Cold shock protein CapB (69 aa).

The region spanning 7-66 is the CSD domain; the sequence is GTVKWFNDEKGFGFITPQSGDDLFVHFKAIQSDGFKSLKEGQQVSFIATRGQKGMQAEEV.

Its subcellular location is the cytoplasm. Its function is as follows. Affects cell viability at low temperatures. This is Cold shock protein CapB (capB) from Pseudomonas fragi.